Consider the following 802-residue polypeptide: Lon protease (802 aa).

Positions 17–209 constitute a Lon N-terminal domain; it reads LPILPLNNVV…QVLSFLERER (193 aa). 363-370 serves as a coordination point for ATP; sequence GPPGVGKT. Residues 599 to 780 form the Lon proteolytic domain; that stretch reads EDEVGVVTGL…DEVLPRVLHP (182 aa). Residues serine 686 and lysine 729 contribute to the active site.

This sequence belongs to the peptidase S16 family. In terms of assembly, homohexamer. Organized in a ring with a central cavity.

Its subcellular location is the cytoplasm. The enzyme catalyses Hydrolysis of proteins in presence of ATP.. Its function is as follows. ATP-dependent serine protease that mediates the selective degradation of mutant and abnormal proteins as well as certain short-lived regulatory proteins. Required for cellular homeostasis and for survival from DNA damage and developmental changes induced by stress. Degrades polypeptides processively to yield small peptide fragments that are 5 to 10 amino acids long. Binds to DNA in a double-stranded, site-specific manner. The polypeptide is Lon protease (Roseiflexus castenholzii (strain DSM 13941 / HLO8)).